Here is an 81-residue protein sequence, read N- to C-terminus: uncharacterized protein (81 aa).

This is an uncharacterized protein from Sulfolobus islandicus rod-shaped virus 1 (SIRV-1).